Here is a 235-residue protein sequence, read N- to C-terminus: Ribonuclease 3 (235 aa).

Residues 11–137 (RAWCAEALGY…VVGALYLDGG (127 aa)) enclose the RNase III domain. Residue glutamate 51 coordinates Mg(2+). The active site involves aspartate 55. Mg(2+) contacts are provided by aspartate 123 and glutamate 126. Glutamate 126 is a catalytic residue. Residues 164-233 (DYKTQLQEQL…ARQALMPEHH (70 aa)) form the DRBM domain.

The protein belongs to the ribonuclease III family. As to quaternary structure, homodimer. Mg(2+) serves as cofactor.

It is found in the cytoplasm. It carries out the reaction Endonucleolytic cleavage to 5'-phosphomonoester.. Functionally, digests double-stranded RNA. Involved in the processing of primary rRNA transcript to yield the immediate precursors to the large and small rRNAs (23S and 16S). Processes some mRNAs, and tRNAs when they are encoded in the rRNA operon. Processes pre-crRNA and tracrRNA of type II CRISPR loci if present in the organism. The chain is Ribonuclease 3 from Symbiobacterium thermophilum (strain DSM 24528 / JCM 14929 / IAM 14863 / T).